The chain runs to 207 residues: Coiled-coil domain-containing protein 124 homolog (207 aa).

Residues 1–90 are disordered; sequence MGNPKKRAEK…KAAKKNSSLD (90 aa). A coiled-coil region spans residues 5 to 71; that stretch reads KKRAEKAEAA…RLEKEEMESL (67 aa). 2 stretches are compositionally biased toward basic and acidic residues: residues 9-28 and 41-65; these read EKAEAAKSRKQDEEKKKKDA and NKKEQEAEKRKAALERKAERERLEK.

This sequence belongs to the CCDC124 family. Associates with translationally inactive ribosomes in the nonrotated state.

It localises to the cytoplasm. The protein localises to the nucleus. Its function is as follows. Ribosome-binding protein involved in ribosome hibernation by associating with translationally inactive ribosomes. Required for translational recovery after starvation from stationary phase. May facilitate rapid translation reactivation by stabilizing the recycling-competent state of inactive ribosomes. This is Coiled-coil domain-containing protein 124 homolog from Schizosaccharomyces pombe (strain 972 / ATCC 24843) (Fission yeast).